Here is a 230-residue protein sequence, read N- to C-terminus: MASTMTPYFGIVVSLIAYGIGTLLFKHSKGFFLFTPLFVAMVLGIVFLKVGNFTFEEYNTGGKMISFFLEPATIAFAIPLYKQVDKLKKYWWQILSAIVVGSICSVIVVFIVAKAIGLDTAVMNSMLPQAATTAIALPISESIGGIPAITSFAVIFNAVIVYALGALFLKTFRVKHPIAKGLALGTAGHALGVAVGIEMGEVEAAMASIAVTVVGVVTVVVIPMFMPFIG.

The next 7 helical transmembrane spans lie at 5-25, 30-50, 61-81, 92-112, 149-169, 177-197, and 209-229; these read MTPYFGIVVSLIAYGIGTLLF, GFFLFTPLFVAMVLGIVFLKV, GGKMISFFLEPATIAFAIPLY, WQILSAIVVGSICSVIVVFIV, ITSFAVIFNAVIVYALGALFL, PIAKGLALGTAGHALGVAVGI, and IAVTVVGVVTVVVIPMFMPFI.

The protein belongs to the CidB/LrgB family. LrgB subfamily.

The protein localises to the cell membrane. In terms of biological role, inhibits the expression or activity of extracellular murein hydrolases by interacting, possibly with LrgA, with the holin-like protein CidA. The LrgAB and CidA proteins may affect the proton motive force of the membrane. May be involved in programmed cell death (PCD), possibly triggering PCD in response to antibiotics and environmental stresses. This Bacillus cereus (strain Q1) protein is Antiholin-like protein LrgB.